Reading from the N-terminus, the 548-residue chain is ATP synthase subunit alpha, mitochondrial (548 aa).

209–216 contacts ATP; sequence GDRQTGKT.

It belongs to the ATPase alpha/beta chains family. As to quaternary structure, F-type ATPases have 2 components, CF(1) - the catalytic core - and CF(0) - the membrane proton channel. CF(1) has five subunits: alpha(3), beta(3), gamma(1), delta(1), epsilon(1). CF(0) has three main subunits: a, b and c.

The protein resides in the mitochondrion. Its subcellular location is the mitochondrion inner membrane. Functionally, mitochondrial membrane ATP synthase (F(1)F(0) ATP synthase or Complex V) produces ATP from ADP in the presence of a proton gradient across the membrane which is generated by electron transport complexes of the respiratory chain. F-type ATPases consist of two structural domains, F(1) - containing the extramembraneous catalytic core, and F(0) - containing the membrane proton channel, linked together by a central stalk and a peripheral stalk. During catalysis, ATP synthesis in the catalytic domain of F(1) is coupled via a rotary mechanism of the central stalk subunits to proton translocation. Subunits alpha and beta form the catalytic core in F(1). Rotation of the central stalk against the surrounding alpha(3)beta(3) subunits leads to hydrolysis of ATP in three separate catalytic sites on the beta subunits. Subunit alpha does not bear the catalytic high-affinity ATP-binding sites. This is ATP synthase subunit alpha, mitochondrial (ATP1) from Kluyveromyces lactis (strain ATCC 8585 / CBS 2359 / DSM 70799 / NBRC 1267 / NRRL Y-1140 / WM37) (Yeast).